The sequence spans 394 residues: Anhydro-N-acetylmuramic acid kinase (394 aa).

Residue 11 to 18 participates in ATP binding; it reads GTSADGID.

Belongs to the anhydro-N-acetylmuramic acid kinase family.

The catalysed reaction is 1,6-anhydro-N-acetyl-beta-muramate + ATP + H2O = N-acetyl-D-muramate 6-phosphate + ADP + H(+). Its pathway is amino-sugar metabolism; 1,6-anhydro-N-acetylmuramate degradation. It functions in the pathway cell wall biogenesis; peptidoglycan recycling. Functionally, catalyzes the specific phosphorylation of 1,6-anhydro-N-acetylmuramic acid (anhMurNAc) with the simultaneous cleavage of the 1,6-anhydro ring, generating MurNAc-6-P. Is required for the utilization of anhMurNAc either imported from the medium or derived from its own cell wall murein, and thus plays a role in cell wall recycling. This chain is Anhydro-N-acetylmuramic acid kinase, found in Deinococcus geothermalis (strain DSM 11300 / CIP 105573 / AG-3a).